The primary structure comprises 135 residues: Large ribosomal subunit protein eL32 (135 aa).

The protein belongs to the eukaryotic ribosomal protein eL32 family.

This chain is Large ribosomal subunit protein eL32 (rpl32e), found in Methanococcus maripaludis (strain DSM 14266 / JCM 13030 / NBRC 101832 / S2 / LL).